Here is a 100-residue protein sequence, read N- to C-terminus: Integration host factor subunit alpha (100 aa).

The protein belongs to the bacterial histone-like protein family. In terms of assembly, heterodimer of an alpha and a beta chain.

In terms of biological role, this protein is one of the two subunits of integration host factor, a specific DNA-binding protein that functions in genetic recombination as well as in transcriptional and translational control. The polypeptide is Integration host factor subunit alpha (Jannaschia sp. (strain CCS1)).